The chain runs to 69 residues: Cytochrome b-c1 complex subunit 6 (69 aa).

2 disulfides stabilise this stretch: cysteine 17–cysteine 59 and cysteine 31–cysteine 45.

This sequence belongs to the UQCRH/QCR6 family. Component of the ubiquinol-cytochrome c oxidoreductase (cytochrome b-c1 complex, complex III, CIII), a multisubunit enzyme composed of 3 respiratory subunits cytochrome b, cytochrome c1 and Rieske protein, 2 core protein subunits, and additional low-molecular weight protein subunits. The complex exists as an obligatory dimer and forms supercomplexes (SCs) in the inner mitochondrial membrane with cytochrome c oxidase (complex IV, CIV).

Its subcellular location is the mitochondrion inner membrane. Component of the ubiquinol-cytochrome c oxidoreductase, a multisubunit transmembrane complex that is part of the mitochondrial electron transport chain which drives oxidative phosphorylation. The respiratory chain contains 3 multisubunit complexes succinate dehydrogenase (complex II, CII), ubiquinol-cytochrome c oxidoreductase (cytochrome b-c1 complex, complex III, CIII) and cytochrome c oxidase (complex IV, CIV), that cooperate to transfer electrons derived from NADH and succinate to molecular oxygen, creating an electrochemical gradient over the inner membrane that drives transmembrane transport and the ATP synthase. The cytochrome b-c1 complex catalyzes electron transfer from ubiquinol to cytochrome c, linking this redox reaction to translocation of protons across the mitochondrial inner membrane, with protons being carried across the membrane as hydrogens on the quinol. In the process called Q cycle, 2 protons are consumed from the matrix, 4 protons are released into the intermembrane space and 2 electrons are passed to cytochrome c. This chain is Cytochrome b-c1 complex subunit 6, found in Solanum tuberosum (Potato).